Consider the following 146-residue polypeptide: Mu-like prophage FluMu G protein 1 (146 aa).

To phage Mu protein G.

In Haemophilus influenzae (strain ATCC 51907 / DSM 11121 / KW20 / Rd), this protein is Mu-like prophage FluMu G protein 1.